Consider the following 457-residue polypeptide: GTPase Der (457 aa).

EngA-type G domains are found at residues 4–169 (PTIA…PENN) and 177–352 (IMMS…NQHR). GTP contacts are provided by residues 10–17 (GRPNVGKS), 57–61 (DTGGL), 120–123 (NKCE), 183–190 (GRPNVGKS), 230–234 (DTAGI), and 295–298 (NKWD). One can recognise a KH-like domain in the interval 353–438 (RRVTTSVVNE…PLILLWRGKQ (86 aa)).

The protein belongs to the TRAFAC class TrmE-Era-EngA-EngB-Septin-like GTPase superfamily. EngA (Der) GTPase family. In terms of assembly, associates with the 50S ribosomal subunit.

Its function is as follows. GTPase that plays an essential role in the late steps of ribosome biogenesis. The chain is GTPase Der from Prochlorococcus marinus (strain AS9601).